A 629-amino-acid chain; its full sequence is Protein EDS1B (629 aa).

The Nucleophile role is filled by serine 123. Active-site charge relay system residues include aspartate 187 and histidine 317.

In terms of assembly, interacts (via N-terminus) with PAD4 and SAG101. Part of a nuclear complex made of EDS1, PAD4 and SAG101, that can be redirected to the cytoplasm in the presence of an extranuclear form of EDS1. Does not interact with itself or with EDS1.

It localises to the nucleus. Its subcellular location is the cytoplasm. Acts as a second functional copy of EDS1. Can mediate HRT-mediated resistance to turnip crinkle virus. The sequence is that of Protein EDS1B (EDS1B) from Arabidopsis thaliana (Mouse-ear cress).